The chain runs to 104 residues: Urease subunit beta (104 aa).

The protein belongs to the urease beta subunit family. In terms of assembly, heterotrimer of UreA (gamma), UreB (beta) and UreC (alpha) subunits. Three heterotrimers associate to form the active enzyme.

The protein localises to the cytoplasm. It catalyses the reaction urea + 2 H2O + H(+) = hydrogencarbonate + 2 NH4(+). It functions in the pathway nitrogen metabolism; urea degradation; CO(2) and NH(3) from urea (urease route): step 1/1. The chain is Urease subunit beta from Mycolicibacterium vanbaalenii (strain DSM 7251 / JCM 13017 / BCRC 16820 / KCTC 9966 / NRRL B-24157 / PYR-1) (Mycobacterium vanbaalenii).